Consider the following 720-residue polypeptide: Inactive serine protease PAMR1 (720 aa).

The N-terminal stretch at 1–21 is a signal peptide; the sequence is MELGCWTQLGLTFLQLLLISS. Cystine bridges form between cysteine 128–cysteine 150, cysteine 177–cysteine 199, cysteine 239–cysteine 250, cysteine 244–cysteine 260, cysteine 262–cysteine 271, cysteine 280–cysteine 329, cysteine 315–cysteine 342, and cysteine 414–cysteine 442. Residues 128 to 236 enclose the CUB domain; it reads CGQVLRAPKG…DGFHAIFEEI (109 aa). The region spanning 235-272 is the EGF-like domain; that stretch reads EITACSSSPCFHDGTCVLDKAGSYKCACLAGYTGQRCE. Sushi domains are found at residues 278-344 and 387-444; these read RNCS…ICIK and APTK…SCIP. The Peptidase S1 domain maps to 445–720; that stretch reads ICGKIENVTA…FKDWIERNMK (276 aa). Asparagine 451 is a glycosylation site (N-linked (GlcNAc...) asparagine). A disulfide bridge connects residues cysteine 489 and cysteine 505. Asparagine 614 carries an N-linked (GlcNAc...) asparagine glycan. Intrachain disulfides connect cysteine 630–cysteine 649 and cysteine 661–cysteine 697.

The protein belongs to the peptidase S1 family.

It localises to the secreted. May play a role in regeneration of skeletal muscle. The chain is Inactive serine protease PAMR1 (PAMR1) from Pongo abelii (Sumatran orangutan).